Reading from the N-terminus, the 168-residue chain is Small ribosomal subunit protein uS5 (168 aa).

Residues 17–80 enclose the S5 DRBM domain; the sequence is IEDQLVAVNR…EDGKKKMINV (64 aa).

Belongs to the universal ribosomal protein uS5 family. Part of the 30S ribosomal subunit. Contacts proteins S4 and S8.

Functionally, with S4 and S12 plays an important role in translational accuracy. In terms of biological role, located at the back of the 30S subunit body where it stabilizes the conformation of the head with respect to the body. In Lactobacillus helveticus (strain DPC 4571), this protein is Small ribosomal subunit protein uS5.